Reading from the N-terminus, the 334-residue chain is tRNA methyltransferase 10 homolog A (334 aa).

2 disordered regions span residues 1-101 (MSLE…SRKR) and 290-334 (PLTE…EQNS). Over residues 26-40 (HAGNNTPLQENSSAP) the composition is skewed to polar residues. Positions 62 to 94 (KQWEDQRELRKQKRKEKRQKRKLERQAQAEHNI) form a coiled coil. The segment covering 71-84 (RKQKRKEKRQKRKL) has biased composition (basic residues). The segment covering 85–98 (ERQAQAEHNIDANS) has biased composition (basic and acidic residues). The SAM-dependent MTase TRM10-type domain maps to 98-289 (SRKRFRHEVQ…SVLPQRKGAI (192 aa)). The segment covering 305–317 (QEDGEDSDSDSSI) has biased composition (acidic residues).

It belongs to the class IV-like SAM-binding methyltransferase superfamily. TRM10 family.

The enzyme catalyses guanosine(9) in tRNA + S-adenosyl-L-methionine = N(1)-methylguanosine(9) in tRNA + S-adenosyl-L-homocysteine + H(+). In terms of biological role, S-adenosyl-L-methionine-dependent guanine N(1)-methyltransferase that catalyzes the formation of N(1)-methylguanine at position 9 (m1G9) in tRNAs. Probably not able to catalyze formation of N(1)-methyladenine at position 9 (m1A9) in tRNAs. This Xenopus tropicalis (Western clawed frog) protein is tRNA methyltransferase 10 homolog A (trmt10a).